A 316-amino-acid chain; its full sequence is Aquaglyceroporin-2 (316 aa).

Positions 1–31 (MADERGPINKSGPSSTYGATENNGESGGTRG) are disordered. The Cytoplasmic portion of the chain corresponds to 1 to 59 (MADERGPINKSGPSSTYGATENNGESGGTRGAPATEDVIVIQDSGWYYIKFRFKEPFAE). A compositionally biased stretch (polar residues) spans 11-24 (SGPSSTYGATENNG). Residues 60-80 (FLGTFILVAFGVGAIAQTVLS) form a helical membrane-spanning segment. Topologically, residues 81-86 (KGATGN) are extracellular. The helical transmembrane segment at 87-107 (WITIALGFGLGLALGIAVSGH) threads the bilayer. Residues 108–131 (YSGGHLNPAVTITLAIYRKFPWVK) are Cytoplasmic-facing. An NPA 1 motif is present at residues 114 to 116 (NPA). Residues 132–152 (VPVYITAQVLGAFVAAAVIYL) traverse the membrane as a helical segment. Residues 153–187 (NYLPAIYNFAGDKRDVIGANATAGIFATYPQPFMS) lie on the Extracellular side of the membrane. N-linked (GlcNAc...) asparagine glycosylation occurs at Asn-172. A helical transmembrane segment spans residues 188–208 (IGGAFFSEALGTFFLLFVILA). Residues 209-219 (MTDERNVPTTR) are Cytoplasmic-facing. A helical membrane pass occupies residues 220–240 (IVAPITIGLTLTAIAISLGFE). The Extracellular segment spans residues 241 to 271 (TGFSLNAARDFGPRLFTFFIGYGVEVFTAYK). Residues 246–248 (NAA) carry the NPA 2 motif. Residues 272–292 (FYFWIPLVAPIVGGLVAGFVY) traverse the membrane as a helical segment. Residues 293–316 (DSLLYWGEKSFLNKNVHHEHRAVA) lie on the Cytoplasmic side of the membrane.

Belongs to the MIP/aquaporin (TC 1.A.8) family.

The protein localises to the cell membrane. It is found in the membrane. It carries out the reaction H2O(in) = H2O(out). The catalysed reaction is glycerol(in) = glycerol(out). With respect to regulation, polyethylene glycol (PEG) stimulates whereas glycerol inhibits the aquaporin activity. Functionally, water channel required to facilitate the transport of water across membranes. Stimulates plant drought tolerance by facilitating the transport of water from the arbuscular mycorrhiza fungus to host plants. The protein is Aquaglyceroporin-2 of Rhizophagus irregularis (Arbuscular mycorrhizal fungus).